We begin with the raw amino-acid sequence, 366 residues long: 5-amino-6-(D-ribitylamino)uracil--L-tyrosine 4-hydroxyphenyl transferase (366 aa).

A Radical SAM core domain is found at 51–290 (RCGNAITWVK…MIAISRLFLD (240 aa)). Cys70, Cys74, and Cys77 together coordinate [4Fe-4S] cluster.

This sequence belongs to the radical SAM superfamily. CofH family. As to quaternary structure, consists of two subunits, CofG and CofH. It depends on [4Fe-4S] cluster as a cofactor.

The enzyme catalyses 5-amino-6-(D-ribitylamino)uracil + L-tyrosine + S-adenosyl-L-methionine = 5-amino-5-(4-hydroxybenzyl)-6-(D-ribitylimino)-5,6-dihydrouracil + 2-iminoacetate + 5'-deoxyadenosine + L-methionine + H(+). The protein operates within cofactor biosynthesis; coenzyme F0 biosynthesis. Functionally, catalyzes the radical-mediated synthesis of 5-amino-5-(4-hydroxybenzyl)-6-(D-ribitylimino)-5,6-dihydrouracil from 5-amino-6-(D-ribitylamino)uracil and L-tyrosine. This Methanospirillum hungatei JF-1 (strain ATCC 27890 / DSM 864 / NBRC 100397 / JF-1) protein is 5-amino-6-(D-ribitylamino)uracil--L-tyrosine 4-hydroxyphenyl transferase.